We begin with the raw amino-acid sequence, 134 residues long: Small ribosomal subunit protein bS6 (134 aa).

This sequence belongs to the bacterial ribosomal protein bS6 family.

In terms of biological role, binds together with bS18 to 16S ribosomal RNA. In Pelodictyon phaeoclathratiforme (strain DSM 5477 / BU-1), this protein is Small ribosomal subunit protein bS6.